The primary structure comprises 542 residues: DM7 family protein GG17591 (542 aa).

A compositionally biased stretch (basic and acidic residues) spans 415 to 430 (GETQEMDEAHPTKEES). A disordered region spans residues 415-443 (GETQEMDEAHPTKEESKSEEEGEVQSGSQ).

This sequence belongs to the DM7 family.

This Drosophila erecta (Fruit fly) protein is DM7 family protein GG17591.